A 436-amino-acid polypeptide reads, in one-letter code: [Pyruvate dehydrogenase (acetyl-transferring)] kinase isozyme 1, mitochondrial (436 aa).

The N-terminal 28 residues, 1–28 (MRLARLLRGAALAGPGPGLRAAGFSRSF), are a transit peptide targeting the mitochondrion. Residue tyrosine 136 is modified to Phosphotyrosine; by FGFR1. Positions 163–393 (YKESFGVDPV…DAVIYIKALS (231 aa)) constitute a Histidine kinase domain. Tyrosine 243 is modified (phosphotyrosine; by FGFR1, ABL1, FLT3 and JAK2). Tyrosine 244 is modified (phosphotyrosine; by FGFR1). ATP-binding positions include 279–286 (ELFKNAMR), aspartate 318, 337–338 (ST), and 354–359 (GFGYGL). Threonine 338 carries the post-translational modification Phosphothreonine. N6-succinyllysine is present on lysine 405.

Belongs to the PDK/BCKDK protein kinase family. As to quaternary structure, homodimer, and heterodimer with PDK2. Interacts with the pyruvate dehydrogenase complex subunit DLAT, and is part of the multimeric pyruvate dehydrogenase complex that contains multiple copies of pyruvate dehydrogenase (E1), dihydrolipoamide acetyltransferase (DLAT, E2) and lipoamide dehydrogenase (DLD, E3). Interacts with phosphoglycerate kinase PGK1; the interaction is direct, occurs under hypoxic conditions and leads to PDK1-mediated inhibition of pyruvate dehydrogenase complex activity. Post-translationally, phosphorylated by constitutively activated ABL1, FGFR1, FLT3 and JAK2 (in vitro), and this may also occur in cancer cells that express constitutively activated ABL1, FGFR1, FLT3 and JAK2. Phosphorylation at Tyr-243 and Tyr-244 strongly increases kinase activity, while phosphorylation at Tyr-136 has a lesser effect. Phosphorylated under hypoxic conditions at Thr-338 by phosphoglycerate kinase PGK1 which has an activating effect. In terms of tissue distribution, expressed predominantly in the heart. Detected at lower levels in liver, skeletal muscle and pancreas.

The protein localises to the mitochondrion matrix. The enzyme catalyses L-seryl-[pyruvate dehydrogenase E1 alpha subunit] + ATP = O-phospho-L-seryl-[pyruvate dehydrogenase E1 alpha subunit] + ADP + H(+). With respect to regulation, activity is enhanced by binding to the pyruvate dehydrogenase subunit DLAT. Inhibited by AZD7545; this compound interferes with DLAT binding and thereby inhibits kinase activity. Inhibited by dichloroacetate and radicicol. Activated under hypoxic conditions by phosphoglycerate kinase PGK1-mediated phosphorylation at Thr-338. Functionally, kinase that plays a key role in regulation of glucose and fatty acid metabolism and homeostasis via phosphorylation of the pyruvate dehydrogenase subunits PDHA1 and PDHA2. This inhibits pyruvate dehydrogenase activity, and thereby regulates metabolite flux through the tricarboxylic acid cycle, down-regulates aerobic respiration and inhibits the formation of acetyl-coenzyme A from pyruvate. Plays an important role in cellular responses to hypoxia and is important for cell proliferation under hypoxia. The sequence is that of [Pyruvate dehydrogenase (acetyl-transferring)] kinase isozyme 1, mitochondrial (PDK1) from Homo sapiens (Human).